A 471-amino-acid chain; its full sequence is Vitellogenic carboxypeptidase (471 aa).

Positions 1-19 are cleaved as a signal peptide; that stretch reads MVKFHLLVLIAFTCYTCSD. Residue Asn135 is glycosylated (N-linked (GlcNAc...) asparagine). Residues Ser207, Asp391, and His448 contribute to the active site.

Belongs to the peptidase S10 family. As to expression, synthesized in the fat body of vitellogenic females, secreted into the hemolymph and accumulates in yolk bodies of developing oocytes.

The protein resides in the secreted. Functionally, may play a role in activating hydrolytic enzymes that are involved in the degradation of yolk proteins in developing embryos or may function as an exopeptidase in the degradation of vitellogenin. This Aedes aegypti (Yellowfever mosquito) protein is Vitellogenic carboxypeptidase (VCP).